Consider the following 341-residue polypeptide: MTETDEGAPVNHSATMWAVVGVPPVCGGQPGDSGVVAGTSRALVDAAIIAPVTTLTRDEPAQYDRYEFEGPRRRARRERAERRAAQACAIAIEEARREAKHRIHRQMSSEANSPKPVARGVVRGLKTLFATVMFSIAGFGLGLALYVTPAMSVRNIVVTGIETVTREEVLDAAGVQLGTPLLQINTNQVADQVAAIRRVASARAQRQYPSALRITIVERVPVVVKDFPDGPHLFDCDGVDFATAPPPPALPYIDVGHPGPIDPATKAALVVLLALRPEVVSQVARIAAPSVSSITLILTDGRAVIWGSTDRAEEKAEKLAALLTQPGRTYDVSSPDLPTVK.

Topologically, residues 1–126 (MTETDEGAPV…VARGVVRGLK (126 aa)) are cytoplasmic. Residues 127-147 (TLFATVMFSIAGFGLGLALYV) form a helical membrane-spanning segment. Residues 148 to 341 (TPAMSVRNIV…VSSPDLPTVK (194 aa)) lie on the Extracellular side of the membrane. The 69-residue stretch at 151–219 (MSVRNIVVTG…SALRITIVER (69 aa)) folds into the POTRA domain.

Belongs to the FtsQ/DivIB family. FtsQ subfamily.

Its subcellular location is the cell membrane. Functionally, essential cell division protein. The polypeptide is Cell division protein FtsQ (Mycobacterium leprae (strain Br4923)).